The following is a 492-amino-acid chain: GlcNAc-binding protein A (492 aa).

An N-terminal signal peptide occupies residues 1–23 (MNKSSTKTLIALSMMAVSSGVSA). The 181-residue stretch at 24-204 (HGYVSETNDG…AFYNVIDVKF (181 aa)) folds into the Chitin-binding type-4 domain. The 42-residue stretch at 443–484 (AGTKVLAEDGNVYQCKEFPYSGYCVQWTETATNFAPGVGSDW) folds into the Chitin-binding type-3 domain.

The protein belongs to the GbpA family.

Its subcellular location is the secreted. Its function is as follows. Probably interacts with GlcNAc residues. May promote attachment to both epithelial cell surfaces and chitin. This is GlcNAc-binding protein A from Aliivibrio fischeri (strain ATCC 700601 / ES114) (Vibrio fischeri).